The sequence spans 431 residues: MLNFAYQEHVRSYYFDSRNQDFQFPPLTQIEHADVCVIGAGFFGLSAALELAEKGKKVIVLEGARVGFGASGRSGGQAINGFEEGIDEYIKQVGEDKAHKLWNMSLETIDIIDERIEKYSIQCDWKKGYATLALNERRMDDLIEMEKESHKNFGYQNMQLWDKTKLKQHLGSDIYVGGLFDSNSGHLHPLNYCLGLAKACVDLGVQIFEQSPVVDMVEKNGCVEVKTAKSAVISQDVILATNAYIDVLPKSIHHGINRKILPVESFIIATEPLSQAVADSVINNGMSVCDNNLLLDYYRLSADNRLLFGSDSSSEKDMVAIMRKNMLCVFPQLENVKIDYGWAGPIDMTLNSTPHFGRISPHIYFAHGYSGHGVALTGLAGRIVAEAILGDDERLSIFEGLKVPSVYGGRIIKDLATKIGVQYYKFLDKYR.

The sequence is that of Probable oxidoreductase OrdL (ordL) from Haemophilus influenzae (strain ATCC 51907 / DSM 11121 / KW20 / Rd).